The sequence spans 348 residues: Cyclic AMP-dependent transcription factor ATF-4 (348 aa).

Lys-53 is covalently cross-linked (Glycyl lysine isopeptide (Lys-Gly) (interchain with G-Cter in SUMO2)). Disordered stretches follow at residues 151–174 (QGAP…TPDH) and 187–265 (PEGD…GEKM). Phosphoserine occurs at positions 211, 215, 220, 227, and 231. A BetaTrCP degron motif motif is present at residues 211–220 (SDNDSGICMS). Residues 221-241 (PDSSLGSPQDSPSTSRGSPNK) show a composition bias toward polar residues. Residue Pro-232 is modified to 4-hydroxyproline. Ser-242 and Ser-245 each carry phosphoserine. Residues 242–253 (SLLSPGALSGSS) are compositionally biased toward low complexity. Glycyl lysine isopeptide (Lys-Gly) (interchain with G-Cter in SUMO2) cross-links involve residues Lys-256, Lys-264, and Lys-269. Residues 275–338 (LDKKLKKMEQ…QYLKDQIEEV (64 aa)) enclose the bZIP domain. Positions 277 to 297 (KKLKKMEQNKTAATRYRQKKR) are basic motif. The interaction with GABBR1 stretch occupies residues 302–338 (ALTGECKELEKKNEALKEKADSLAKEIQYLKDQIEEV). The leucine-zipper stretch occupies residues 303 to 331 (LTGECKELEKKNEALKEKADSLAKEIQYL). Lys-308 bears the N6-acetyllysine mark.

This sequence belongs to the bZIP family. In terms of assembly, binds DNA as a homodimer and as a heterodimer. Heterodimer; heterodimerizes with CEBPB. Heterodimer; heterodimerizes with DDIT3/CHOP. Interacts with CEP290 (via an N-terminal region). Interacts with NEK6, DAPK2 (isoform 2) and ZIPK/DAPK3. Interacts (via its leucine zipper domain) with GABBR1 and GABBR2 (via their C-termini). Forms a heterodimer with TXLNG in osteoblasts. Interacts (via its DNA binding domain) with FOXO1 (C-terminal half); the interaction occurs in osteoblasts and regulates glucose homeostasis through suppression of beta-cell proliferation and a decrease in insulin production. Interacts with SATB2; the interaction results in enhanced DNA binding and transactivation by these transcription factors. Interacts with ABRAXAS2. Interacts with TRIB3, inhibiting the transactivation activity of ATF4. Interacts with DISC1; which inhibits ATF4 transcription factor activity by disrupting ATF4 dimerization and DNA-binding. Interacts with EP300/p300; EP300/p300 stabilizes ATF4 and increases its transcriptional activity independently of its catalytic activity by preventing its ubiquitination. In terms of processing, ubiquitinated by SCF(BTRC) in response to mTORC1 signal, followed by proteasomal degradation and leading to down-regulate expression of SIRT4. Interaction with EP300/p300 inhibits ubiquitination by SCF(BTRC). Phosphorylation at Ser-242 by RPS6KA3/RSK2 in osteoblasts enhances transactivation activity and promotes osteoblast differentiation. Phosphorylated on the betaTrCP degron motif at Ser-215, followed by phosphorylation at Ser-220, Ser-227, Ser-231 and Ser-245, promoting interaction with BTRC and ubiquitination. Phosphorylation is promoted by mTORC1. Phosphorylation at Ser-211 by CK2 decreases its stability. Phosphorylated by NEK6. Post-translationally, hydroxylated by PHD3, leading to decreased protein stability.

The protein resides in the nucleus. It localises to the nucleus speckle. Its subcellular location is the cytoplasm. The protein localises to the cell membrane. It is found in the cytoskeleton. The protein resides in the microtubule organizing center. It localises to the centrosome. Functionally, transcription factor that binds the cAMP response element (CRE) (consensus: 5'-GTGACGT[AC][AG]-3') and displays two biological functions, as regulator of metabolic and redox processes under normal cellular conditions, and as master transcription factor during integrated stress response (ISR). Binds to asymmetric CRE's as a heterodimer and to palindromic CRE's as a homodimer. Core effector of the ISR, which is required for adaptation to various stress such as endoplasmic reticulum (ER) stress, amino acid starvation, mitochondrial stress or oxidative stress. During ISR, ATF4 translation is induced via an alternative ribosome translation re-initiation mechanism in response to EIF2S1/eIF-2-alpha phosphorylation, and stress-induced ATF4 acts as a master transcription factor of stress-responsive genes in order to promote cell recovery. Promotes the transcription of genes linked to amino acid sufficiency and resistance to oxidative stress to protect cells against metabolic consequences of ER oxidation. Activates the transcription of NLRP1, possibly in concert with other factors in response to ER stress. Activates the transcription of asparagine synthetase (ASNS) in response to amino acid deprivation or ER stress. However, when associated with DDIT3/CHOP, the transcriptional activation of the ASNS gene is inhibited in response to amino acid deprivation. Together with DDIT3/CHOP, mediates programmed cell death by promoting the expression of genes involved in cellular amino acid metabolic processes, mRNA translation and the terminal unfolded protein response (terminal UPR), a cellular response that elicits programmed cell death when ER stress is prolonged and unresolved. Activates the expression of COX7A2L/SCAF1 downstream of the EIF2AK3/PERK-mediated unfolded protein response, thereby promoting formation of respiratory chain supercomplexes and increasing mitochondrial oxidative phosphorylation. Together with DDIT3/CHOP, activates the transcription of the IRS-regulator TRIB3 and promotes ER stress-induced neuronal cell death by regulating the expression of BBC3/PUMA in response to ER stress. May cooperate with the UPR transcriptional regulator QRICH1 to regulate ER protein homeostasis which is critical for cell viability in response to ER stress. In the absence of stress, ATF4 translation is at low levels and it is required for normal metabolic processes such as embryonic lens formation, fetal liver hematopoiesis, bone development and synaptic plasticity. Acts as a regulator of osteoblast differentiation in response to phosphorylation by RPS6KA3/RSK2: phosphorylation in osteoblasts enhances transactivation activity and promotes expression of osteoblast-specific genes and post-transcriptionally regulates the synthesis of Type I collagen, the main constituent of the bone matrix. Cooperates with FOXO1 in osteoblasts to regulate glucose homeostasis through suppression of beta-cell production and decrease in insulin production. Activates transcription of SIRT4. Regulates the circadian expression of the core clock component PER2 and the serotonin transporter SLC6A4. Binds in a circadian time-dependent manner to the cAMP response elements (CRE) in the SLC6A4 and PER2 promoters and periodically activates the transcription of these genes. Mainly acts as a transcriptional activator in cellular stress adaptation, but it can also act as a transcriptional repressor: acts as a regulator of synaptic plasticity by repressing transcription, thereby inhibiting induction and maintenance of long-term memory. Regulates synaptic functions via interaction with DISC1 in neurons, which inhibits ATF4 transcription factor activity by disrupting ATF4 dimerization and DNA-binding. The polypeptide is Cyclic AMP-dependent transcription factor ATF-4 (Bos taurus (Bovine)).